The chain runs to 465 residues: Argininosuccinate lyase (465 aa).

This sequence belongs to the lyase 1 family. Argininosuccinate lyase subfamily.

The protein resides in the cytoplasm. It carries out the reaction 2-(N(omega)-L-arginino)succinate = fumarate + L-arginine. It functions in the pathway amino-acid biosynthesis; L-arginine biosynthesis; L-arginine from L-ornithine and carbamoyl phosphate: step 3/3. This chain is Argininosuccinate lyase, found in Halorhodospira halophila (strain DSM 244 / SL1) (Ectothiorhodospira halophila (strain DSM 244 / SL1)).